We begin with the raw amino-acid sequence, 181 residues long: Early upstream open reading frame (181 aa).

This sequence belongs to the EUO family.

The chain is Early upstream open reading frame from Chlamydia caviae (strain ATCC VR-813 / DSM 19441 / 03DC25 / GPIC) (Chlamydophila caviae).